Consider the following 137-residue polypeptide: Large ribosomal subunit protein uL16 (137 aa).

The protein belongs to the universal ribosomal protein uL16 family. As to quaternary structure, part of the 50S ribosomal subunit.

Functionally, binds 23S rRNA and is also seen to make contacts with the A and possibly P site tRNAs. This chain is Large ribosomal subunit protein uL16, found in Cellvibrio japonicus (strain Ueda107) (Pseudomonas fluorescens subsp. cellulosa).